We begin with the raw amino-acid sequence, 404 residues long: Phosphoglycerate kinase (404 aa).

Residues 21–23 (DFN), R36, 59–62 (HLGR), R119, and R162 contribute to the substrate site. ATP-binding positions include K213, G300, E331, and 360-363 (GGDS).

The protein belongs to the phosphoglycerate kinase family. As to quaternary structure, monomer.

It localises to the cytoplasm. The enzyme catalyses (2R)-3-phosphoglycerate + ATP = (2R)-3-phospho-glyceroyl phosphate + ADP. It participates in carbohydrate degradation; glycolysis; pyruvate from D-glyceraldehyde 3-phosphate: step 2/5. This chain is Phosphoglycerate kinase, found in Oenococcus oeni (strain ATCC BAA-331 / PSU-1).